Here is a 712-residue protein sequence, read N- to C-terminus: Phosphoribosylformylglycinamidine synthase subunit PurL (712 aa).

His32 is an active-site residue. Tyr35 is an ATP binding site. Residue Glu76 participates in Mg(2+) binding. Substrate contacts are provided by residues Ser77–His80 and Arg99. The active-site Proton acceptor is the His78. Asp100 lines the Mg(2+) pocket. Gln223 provides a ligand contact to substrate. Residue Asp251 participates in Mg(2+) binding. Glu295–Gln297 contributes to the substrate binding site. The ATP site is built by Asp470 and Gly507. Asn508 provides a ligand contact to Mg(2+). Ser510 contacts substrate.

The protein belongs to the FGAMS family. Monomer. Part of the FGAM synthase complex composed of 1 PurL, 1 PurQ and 2 PurS subunits.

It localises to the cytoplasm. The enzyme catalyses N(2)-formyl-N(1)-(5-phospho-beta-D-ribosyl)glycinamide + L-glutamine + ATP + H2O = 2-formamido-N(1)-(5-O-phospho-beta-D-ribosyl)acetamidine + L-glutamate + ADP + phosphate + H(+). It participates in purine metabolism; IMP biosynthesis via de novo pathway; 5-amino-1-(5-phospho-D-ribosyl)imidazole from N(2)-formyl-N(1)-(5-phospho-D-ribosyl)glycinamide: step 1/2. Its function is as follows. Part of the phosphoribosylformylglycinamidine synthase complex involved in the purines biosynthetic pathway. Catalyzes the ATP-dependent conversion of formylglycinamide ribonucleotide (FGAR) and glutamine to yield formylglycinamidine ribonucleotide (FGAM) and glutamate. The FGAM synthase complex is composed of three subunits. PurQ produces an ammonia molecule by converting glutamine to glutamate. PurL transfers the ammonia molecule to FGAR to form FGAM in an ATP-dependent manner. PurS interacts with PurQ and PurL and is thought to assist in the transfer of the ammonia molecule from PurQ to PurL. In Thermococcus gammatolerans (strain DSM 15229 / JCM 11827 / EJ3), this protein is Phosphoribosylformylglycinamidine synthase subunit PurL.